A 514-amino-acid chain; its full sequence is UDP-N-acetylmuramate--L-alanine ligase (514 aa).

Residue 127-133 (GTHGKTT) participates in ATP binding. A compositionally biased stretch (low complexity) spans 495 to 505 (IGGTIPDIPGG). The tract at residues 495–514 (IGGTIPDIPGGSTPDASAAG) is disordered.

It belongs to the MurCDEF family.

The protein resides in the cytoplasm. The enzyme catalyses UDP-N-acetyl-alpha-D-muramate + L-alanine + ATP = UDP-N-acetyl-alpha-D-muramoyl-L-alanine + ADP + phosphate + H(+). It participates in cell wall biogenesis; peptidoglycan biosynthesis. Cell wall formation. The chain is UDP-N-acetylmuramate--L-alanine ligase from Salinispora tropica (strain ATCC BAA-916 / DSM 44818 / JCM 13857 / NBRC 105044 / CNB-440).